The primary structure comprises 114 residues: Large ribosomal subunit protein uL22 (114 aa).

Belongs to the universal ribosomal protein uL22 family. As to quaternary structure, part of the 50S ribosomal subunit.

Its function is as follows. This protein binds specifically to 23S rRNA; its binding is stimulated by other ribosomal proteins, e.g. L4, L17, and L20. It is important during the early stages of 50S assembly. It makes multiple contacts with different domains of the 23S rRNA in the assembled 50S subunit and ribosome. The globular domain of the protein is located near the polypeptide exit tunnel on the outside of the subunit, while an extended beta-hairpin is found that lines the wall of the exit tunnel in the center of the 70S ribosome. In Ehrlichia canis (strain Jake), this protein is Large ribosomal subunit protein uL22.